The primary structure comprises 177 residues: Large ribosomal subunit protein uL6 (177 aa).

It belongs to the universal ribosomal protein uL6 family. As to quaternary structure, part of the 50S ribosomal subunit.

Functionally, this protein binds to the 23S rRNA, and is important in its secondary structure. It is located near the subunit interface in the base of the L7/L12 stalk, and near the tRNA binding site of the peptidyltransferase center. This Methylobacterium nodulans (strain LMG 21967 / CNCM I-2342 / ORS 2060) protein is Large ribosomal subunit protein uL6.